Here is a 151-residue protein sequence, read N- to C-terminus: MTTNTHTLQIEEILELLPHRFPFLLVDRVLDFEEGRFLRAVKNVSVNEPFFQGHFPGKPILPGVLILEAMAQATGILAFKSVGKLEPGELYYFAGIDEARFKRPVVPGDQMIMEVTFEKTRRGLTRFKGVALVDGKVVCEATMMCARSREA.

Histidine 54 is a catalytic residue.

The protein belongs to the thioester dehydratase family. FabZ subfamily.

The protein resides in the cytoplasm. It catalyses the reaction a (3R)-hydroxyacyl-[ACP] = a (2E)-enoyl-[ACP] + H2O. Its function is as follows. Involved in unsaturated fatty acids biosynthesis. Catalyzes the dehydration of short chain beta-hydroxyacyl-ACPs and long chain saturated and unsaturated beta-hydroxyacyl-ACPs. The protein is 3-hydroxyacyl-[acyl-carrier-protein] dehydratase FabZ of Salmonella agona (strain SL483).